Reading from the N-terminus, the 284-residue chain is GPN-loop GTPase 3 (284 aa).

13–18 (GSGKST) contributes to the GTP binding site. The Gly-Pro-Asn (GPN)-loop; involved in dimer interface signature appears at 72 to 74 (GPN). 174–177 (TKMD) is a GTP binding site.

This sequence belongs to the GPN-loop GTPase family. As to quaternary structure, heterodimer with GPN1. Binds to RNA polymerase II (RNAPII). Interacts directly with subunits RPB4 and RPB7 and the CTD of RPB1.

Its function is as follows. Small GTPase required for proper localization of RNA polymerase II (RNAPII). May act at an RNAP assembly step prior to nuclear import. In Homo sapiens (Human), this protein is GPN-loop GTPase 3.